A 740-amino-acid chain; its full sequence is MEPTLQSAMEEQLKILREISDRLAAQEARWRSRESTVTQHSRSIHDLEVAMASAPSATLRAELDAPVAVTYERLDATEAASAARVSALESTTATFDMLFDNSDIVEKFNAEVVADDWGGLFGQHAHPLDSGGARLLLPSAALPFASATDTAFSSIYGVECGTIHTYTAALTRPAALHKPLVVAHAKCSTPGHNRVCAETQRQGPRQARRQCRLRVHVRRLHFTGLQLHVRQHGRRRQHVVHVQRVLPGAELDGRGLRLPWPRVAHGDRPFRAHLQLHHIDPDGGGGGGHGITPPERWLSRAGAYNAAAPNEVDVLRWTLKGVLWPRVTYCIAGWIDLGDGVAEGADHAVRVRFRVDDGCVVEGGTVCAESGSWTEIKGVFRLKRNARVMEVYVQGAVAGIDVKVTDPQVFATNVIQNLAYVDFFTKHFDWAVFEKEFRWYHVEDAAKVFDKMLTKGEEAPSVQRGVVMTAVAHNLLVQALFMDGRASDAYVVLEEMQNNGPFPDVFTYTLKVLKNGQWAEEESTILVPGDIIGVKLGDIISADTRLLEGDPLKIDQSALTGNFCICSIVAGMLVEFIVMYPIQDMVYRPRIDKLLVLLIGGIPIAMPTVLSVTMSIGAYRLAQQGAITKRMTTIEEMAGMDVPCSDKTGTLPWTKLTVIKSLVDVFQRGADQDAVILMDARASCTKNQDAIEATIVSMLAAPKEACAGVQEIQFLPFNPNDKRTAVTYMSLIYALSPGKA.

A PPR repeat occupies 469 to 503 (TAVAHNLLVQALFMDGRASDAYVVLEEMQNNGPFP).

Its function is as follows. Bs1 is probably an active plant retrotransposon. The protein is Putative Pol polyprotein from transposon element Bs1 of Zea mays (Maize).